The following is a 204-amino-acid chain: Paraneoplastic antigen-like protein 8C (204 aa).

The tract at residues 135 to 204 (PPATGPRELP…RRHHASDKKL (70 aa)) is disordered. Residues 182–204 (VGKRGKRKNKKNRRRHHASDKKL) show a composition bias toward basic residues.

This sequence belongs to the PNMA family.

In Homo sapiens (Human), this protein is Paraneoplastic antigen-like protein 8C.